The chain runs to 302 residues: N-acetyl-D-glucosamine kinase (302 aa).

ATP-binding positions include 4 to 11 (GFDIGGTK) and 133 to 139 (GGGGLVL). Residues His-156, Cys-176, Cys-178, and Cys-183 each coordinate Zn(2+).

The protein belongs to the ROK (NagC/XylR) family. NagK subfamily.

The enzyme catalyses N-acetyl-D-glucosamine + ATP = N-acetyl-D-glucosamine 6-phosphate + ADP + H(+). It participates in cell wall biogenesis; peptidoglycan recycling. Its function is as follows. Catalyzes the phosphorylation of N-acetyl-D-glucosamine (GlcNAc) derived from cell-wall degradation, yielding GlcNAc-6-P. The polypeptide is N-acetyl-D-glucosamine kinase (Salmonella typhi).